Reading from the N-terminus, the 274-residue chain is Dermonecrotic toxin SdSicTox-betaIIB1bxii (274 aa).

Residue His-5 is part of the active site. Residues Glu-25 and Asp-27 each coordinate Mg(2+). Residue His-41 is the Nucleophile of the active site. Intrachain disulfides connect Cys-45-Cys-51 and Cys-47-Cys-190. Asp-85 contributes to the Mg(2+) binding site.

The protein belongs to the arthropod phospholipase D family. Class II subfamily. Requires Mg(2+) as cofactor. In terms of tissue distribution, expressed by the venom gland.

The protein localises to the secreted. It catalyses the reaction an N-(acyl)-sphingosylphosphocholine = an N-(acyl)-sphingosyl-1,3-cyclic phosphate + choline. The enzyme catalyses an N-(acyl)-sphingosylphosphoethanolamine = an N-(acyl)-sphingosyl-1,3-cyclic phosphate + ethanolamine. It carries out the reaction a 1-acyl-sn-glycero-3-phosphocholine = a 1-acyl-sn-glycero-2,3-cyclic phosphate + choline. The catalysed reaction is a 1-acyl-sn-glycero-3-phosphoethanolamine = a 1-acyl-sn-glycero-2,3-cyclic phosphate + ethanolamine. In terms of biological role, dermonecrotic toxins cleave the phosphodiester linkage between the phosphate and headgroup of certain phospholipids (sphingolipid and lysolipid substrates), forming an alcohol (often choline) and a cyclic phosphate. This toxin acts on sphingomyelin (SM). It may also act on ceramide phosphoethanolamine (CPE), lysophosphatidylcholine (LPC) and lysophosphatidylethanolamine (LPE), but not on lysophosphatidylserine (LPS), and lysophosphatidylglycerol (LPG). It acts by transphosphatidylation, releasing exclusively cyclic phosphate products as second products. Induces dermonecrosis, hemolysis, increased vascular permeability, edema, inflammatory response, and platelet aggregation. In Sicarius cf. damarensis (strain GJB-2008) (Six-eyed sand spider), this protein is Dermonecrotic toxin SdSicTox-betaIIB1bxii.